An 84-amino-acid polypeptide reads, in one-letter code: MSILSFLLGEKKKSASVAKERLQLIIAHERVGGRPPADYLPALQKELVAVISKYVHISNDDIRVSLERQDDLEVLEVKIEIPQA.

Belongs to the MinE family.

In terms of biological role, prevents the cell division inhibition by proteins MinC and MinD at internal division sites while permitting inhibition at polar sites. This ensures cell division at the proper site by restricting the formation of a division septum at the midpoint of the long axis of the cell. The chain is Cell division topological specificity factor from Burkholderia cenocepacia (strain ATCC BAA-245 / DSM 16553 / LMG 16656 / NCTC 13227 / J2315 / CF5610) (Burkholderia cepacia (strain J2315)).